Here is a 218-residue protein sequence, read N- to C-terminus: Dual specificity protein phosphatase TpbA (218 aa).

The N-terminal stretch at 1–28 (MHRSPLAWLRLLLAAVLGAFLLGGPLHA) is a signal peptide. The 145-residue stretch at 44–188 (DPSINLYRMS…YVRGADVDGL (145 aa)) folds into the Tyrosine-protein phosphatase domain. Catalysis depends on Asp-105, which acts as the Proton donor/acceptor. Catalysis depends on Cys-132, which acts as the Phosphocysteine intermediate.

Belongs to the protein-tyrosine phosphatase family. In terms of assembly, monomer in solution.

The protein localises to the periplasm. The catalysed reaction is O-phospho-L-tyrosyl-[protein] + H2O = L-tyrosyl-[protein] + phosphate. It catalyses the reaction O-phospho-L-threonyl-[protein] + H2O = L-threonyl-[protein] + phosphate. It carries out the reaction O-phospho-L-seryl-[protein] + H2O = L-seryl-[protein] + phosphate. The phosphatase activity is completely inhibited by trisodium orthovanadate, a tyrosine phosphatase specific inhibitor. Functionally, phosphatase that regulates diverse phenotypes in P.aeruginosa via regulation of the concentration of cellular c-di-GMP. Acts by dephosphorylating the membrane-anchored diguanylate cyclase TpbB at tyrosine and serine/threonine sites, leading to inactivation of TpbB and reduced c-di-GMP production. The reduced cellular c-di-GMP concentration leads to reduced adhesin expression, reduced extracellular polysaccharide (EPS) production, pellicule production, cell aggregation and biofilm formation, and enhanced swimming and swarming. It affects colony morphology and controls rugose colony formation. TpbA also acts as a positive regulator of extracellular DNA (eDNA, a major component of the biofilm matrix) and cell lysis by reducing c-di-GMP concentrations. In vitro shows phosphatase activity toward p-nitrophenyl phosphate (pNPP), tyrosine phosphopeptides and a threonine phosphopeptide. Does not have phosphodiesterases (PDE) activity, and cannot degrade c-di-GMP. The sequence is that of Dual specificity protein phosphatase TpbA from Pseudomonas aeruginosa (strain UCBPP-PA14).